The primary structure comprises 716 residues: MCCGSDRLNQIVSSRSSLPISFEEDNNLVTNTDMNHLTVETEDTFASLLELAANNDVEGVRLSIERDPSCVDEAGLWYGRQKGSKAMVNDYRTPLMVAATYGSIDVIKLIVSLTDADVNRACGNDQTTALHCAASGGAVNAIQVVKLLLAAGADLNLLDAEGQRAGDVIVVPPKLEGVKLMLQELLSADGSSTAERNLRVVTNVPNRSSSPCHSPTGENGGSGSGSPLGSPFKLKSTEFKKEYPVDPSLPDIKNSIYATDEFRMYSFKVRPCSRAYSHDWTECPFVHPGENARRRDPRKFHYSCVPCPDFRKGACRRGDMCEYAHGVFECWLHPAQYRTRLCKDGTGCARRVCFFAHTPEELRPLYASTGSAVPSPRSNADYAAALSLLPGSPSGVSVMSPLSPSAAGNGMSHSNMAWPQPNVPALHLPGSNLQSSRLRSSLNARDIPTDEFNMLADYEQQQLLNEYSNALSRSGRMKSMPPSNLEDLFSAEGSSSPRFTDSALASAVFSPTHKSAVFNQFQQQQQQQQSMLSPINTSFSSPKSVDHSLFSGGGRMSPRNVVEPISPMSARVSMLAQCVKQQQQQQQQQQQQHQFRSLSSRELRTNSSPIVGSPVNNNTWSSKWGSSNGQPDWGMSSEALGKLRSSSSFDGDEPDVSWVQSLVKETPAEAKEKAATSSSGEHVMKQPNPVEPVMDHAGLEAWIEQMQLDQLVAQQN.

ANK repeat units lie at residues 90–120 (DYRT…DVNR) and 125–157 (DQTT…DLNL). Residues 201 to 231 (VTNVPNRSSSPCHSPTGENGGSGSGSPLGSP) are disordered. Residues 203-213 (NVPNRSSSPCH) are compositionally biased toward polar residues. 2 C3H1-type zinc fingers span residues 306 to 328 (PCPD…HGVF) and 336 to 360 (QYRT…HTPE). Residues 521 to 562 (FQQQQQQQQSMLSPINTSFSSPKSVDHSLFSGGGRMSPRNVV) are disordered. Positions 530–543 (SMLSPINTSFSSPK) are enriched in polar residues. Residue serine 566 is modified to Phosphoserine. The segment covering 583–594 (QQQQQQQQQQHQ) has biased composition (low complexity). 2 disordered regions span residues 583 to 638 (QQQQ…MSSE) and 667 to 692 (PAEA…PVEP). Over residues 605 to 630 (TNSSPIVGSPVNNNTWSSKWGSSNGQ) the composition is skewed to polar residues.

The polypeptide is Zinc finger CCCH domain-containing protein 30 (Arabidopsis thaliana (Mouse-ear cress)).